A 450-amino-acid polypeptide reads, in one-letter code: tRNA modification GTPase MnmE (450 aa).

(6S)-5-formyl-5,6,7,8-tetrahydrofolate-binding residues include Arg-26, Glu-84, and Lys-123. Residues 219 to 376 form the TrmE-type G domain; it reads GMHVVLVGQP…LKAKLLEMIG (158 aa). Asn-229 contacts K(+). GTP-binding positions include 229–234, 248–254, 273–276, and 357–359; these read NVGKSS, TDIAGTT, DTAG, and SAR. Residue Ser-233 participates in Mg(2+) binding. Residues Thr-248, Ile-250, and Thr-253 each contribute to the K(+) site. Thr-254 is a Mg(2+) binding site. Lys-450 provides a ligand contact to (6S)-5-formyl-5,6,7,8-tetrahydrofolate.

The protein belongs to the TRAFAC class TrmE-Era-EngA-EngB-Septin-like GTPase superfamily. TrmE GTPase family. In terms of assembly, homodimer. Heterotetramer of two MnmE and two MnmG subunits. The cofactor is K(+).

Its subcellular location is the cytoplasm. In terms of biological role, exhibits a very high intrinsic GTPase hydrolysis rate. Involved in the addition of a carboxymethylaminomethyl (cmnm) group at the wobble position (U34) of certain tRNAs, forming tRNA-cmnm(5)s(2)U34. In Chromobacterium violaceum (strain ATCC 12472 / DSM 30191 / JCM 1249 / CCUG 213 / NBRC 12614 / NCIMB 9131 / NCTC 9757 / MK), this protein is tRNA modification GTPase MnmE.